The following is a 190-amino-acid chain: CASP-like protein 2U2 (190 aa).

At 1–10 (MGEKMQGFQG) the chain is on the cytoplasmic side. Residues 11–31 (WSIGIRFLTSCVSIASLILLL) traverse the membrane as a helical segment. Residues 32–59 (KSKQTVQVSVGLDYVTQQVKYSDTSAFV) lie on the Extracellular side of the membrane. A helical transmembrane segment spans residues 60–80 (YLVFSDILVAVYCIVVLVGLI). At 81-94 (PAALGKSHPGKAGQ) the chain is on the cytoplasmic side. Residues 95–115 (WAIFIFDQVLAYVLLAAASSA) form a helical membrane-spanning segment. The Extracellular portion of the chain corresponds to 116–144 (TEVAYLADKGMAKTSWEAVCPRFAHFCHT). Residues 145–165 (VMASISLSFVAVLLLALLAVV) traverse the membrane as a helical segment. The Cytoplasmic segment spans residues 166–190 (SASGLFGRFYRRPLFAVKMRHNTLI).

The protein belongs to the Casparian strip membrane proteins (CASP) family. As to quaternary structure, homodimer and heterodimers.

The protein resides in the cell membrane. The chain is CASP-like protein 2U2 from Pteridium aquilinum subsp. aquilinum (Bracken fern).